A 769-amino-acid polypeptide reads, in one-letter code: 5-methyltetrahydropteroyltriglutamate--homocysteine methyltransferase (769 aa).

5-methyltetrahydropteroyltri-L-glutamate-binding positions include 16–19 (RELK) and Lys121. Residues 415–450 (SMTERDSPHSSRSPLQREALDLPTLPTTTIGSFPQT) form a disordered region. Polar residues predominate over residues 439–449 (LPTTTIGSFPQ). Residues 444 to 446 (IGS) and Glu497 each bind L-homocysteine. L-methionine-binding positions include 444–446 (IGS) and Glu497. Residues 528–529 (RC) and Trp574 contribute to the 5-methyltetrahydropteroyltri-L-glutamate site. Asp612 provides a ligand contact to L-homocysteine. L-methionine is bound at residue Asp612. Residue Glu618 coordinates 5-methyltetrahydropteroyltri-L-glutamate. 3 residues coordinate Zn(2+): His654, Cys656, and Glu678. His707 serves as the catalytic Proton donor. Cys739 is a binding site for Zn(2+).

The protein belongs to the vitamin-B12 independent methionine synthase family. It depends on Zn(2+) as a cofactor.

It carries out the reaction 5-methyltetrahydropteroyltri-L-glutamate + L-homocysteine = tetrahydropteroyltri-L-glutamate + L-methionine. Its pathway is amino-acid biosynthesis; L-methionine biosynthesis via de novo pathway; L-methionine from L-homocysteine (MetE route): step 1/1. Catalyzes the transfer of a methyl group from 5-methyltetrahydrofolate to homocysteine resulting in methionine formation. This Salinibacter ruber (strain DSM 13855 / M31) protein is 5-methyltetrahydropteroyltriglutamate--homocysteine methyltransferase.